Reading from the N-terminus, the 253-residue chain is Aspartic acid-rich protein (253 aa).

Positions 1–22 (MYLFIYIFFFFFFFFFFVIVQK) are cleaved as a signal peptide. A disordered region spans residues 211 to 253 (DDFDEEFDDDDDDDDDDDDDDDDDDKDDDLDGDDDGNNDDNDD).

It belongs to the nucleosome assembly protein (NAP) family.

In Plasmodium falciparum (isolate fcm17 / Senegal), this protein is Aspartic acid-rich protein.